A 111-amino-acid chain; its full sequence is UPF0145 protein RBAM_010660 (111 aa).

This sequence belongs to the UPF0145 family.

This Bacillus velezensis (strain DSM 23117 / BGSC 10A6 / LMG 26770 / FZB42) (Bacillus amyloliquefaciens subsp. plantarum) protein is UPF0145 protein RBAM_010660.